Reading from the N-terminus, the 427-residue chain is Serine--tRNA ligase (427 aa).

231 to 233 contacts L-serine; that stretch reads TAE. 262–264 serves as a coordination point for ATP; the sequence is RSE. Residue Glu-285 participates in L-serine binding. 349 to 352 provides a ligand contact to ATP; the sequence is EISS. An L-serine-binding site is contributed by Ser-385.

This sequence belongs to the class-II aminoacyl-tRNA synthetase family. Type-1 seryl-tRNA synthetase subfamily. As to quaternary structure, homodimer. The tRNA molecule binds across the dimer.

The protein localises to the cytoplasm. It catalyses the reaction tRNA(Ser) + L-serine + ATP = L-seryl-tRNA(Ser) + AMP + diphosphate + H(+). The catalysed reaction is tRNA(Sec) + L-serine + ATP = L-seryl-tRNA(Sec) + AMP + diphosphate + H(+). The protein operates within aminoacyl-tRNA biosynthesis; selenocysteinyl-tRNA(Sec) biosynthesis; L-seryl-tRNA(Sec) from L-serine and tRNA(Sec): step 1/1. In terms of biological role, catalyzes the attachment of serine to tRNA(Ser). Is also able to aminoacylate tRNA(Sec) with serine, to form the misacylated tRNA L-seryl-tRNA(Sec), which will be further converted into selenocysteinyl-tRNA(Sec). The chain is Serine--tRNA ligase from Rhizobium etli (strain ATCC 51251 / DSM 11541 / JCM 21823 / NBRC 15573 / CFN 42).